We begin with the raw amino-acid sequence, 272 residues long: Undecaprenyl-diphosphatase (272 aa).

The next 7 membrane-spanning stretches (helical) occupy residues serine 6–serine 26, alanine 45–tryptophan 65, threonine 92–isoleucine 112, leucine 115–alanine 135, tyrosine 189–leucine 209, methionine 225–leucine 245, and isoleucine 251–phenylalanine 271.

Belongs to the UppP family.

Its subcellular location is the cell inner membrane. The enzyme catalyses di-trans,octa-cis-undecaprenyl diphosphate + H2O = di-trans,octa-cis-undecaprenyl phosphate + phosphate + H(+). Its function is as follows. Catalyzes the dephosphorylation of undecaprenyl diphosphate (UPP). Confers resistance to bacitracin. In Pectobacterium carotovorum subsp. carotovorum (strain PC1), this protein is Undecaprenyl-diphosphatase.